The following is a 249-amino-acid chain: Probable transcriptional regulatory protein DICTH_1505 (249 aa).

This sequence belongs to the TACO1 family.

Its subcellular location is the cytoplasm. The chain is Probable transcriptional regulatory protein DICTH_1505 from Dictyoglomus thermophilum (strain ATCC 35947 / DSM 3960 / H-6-12).